The primary structure comprises 60 residues: Large ribosomal subunit protein bL32 (60 aa).

Belongs to the bacterial ribosomal protein bL32 family.

The polypeptide is Large ribosomal subunit protein bL32 (Kosmotoga olearia (strain ATCC BAA-1733 / DSM 21960 / TBF 19.5.1)).